Reading from the N-terminus, the 120-residue chain is Flagellar protein FliT (120 aa).

The segment at 1–50 (MERHQHLLSEYQQILTLSEQMLMLATVENWDALVDLEMAYLKAVENTANI) is required for homodimerization. Residues 60–98 (LQELLRQKLRSILENEIEIKRLLQRRLDKLSELVGQSTR) are fliD binding.

The protein belongs to the FliT family. In terms of assembly, homodimer. Interacts with FliD and FlhC.

It localises to the cytoplasm. The protein localises to the cytosol. In terms of biological role, dual-function protein that regulates the transcription of class 2 flagellar operons and that also acts as an export chaperone for the filament-capping protein FliD. As a transcriptional regulator, acts as an anti-FlhDC factor; it directly binds FlhC, thus inhibiting the binding of the FlhC/FlhD complex to class 2 promoters, resulting in decreased expression of class 2 flagellar operons. As a chaperone, effects FliD transition to the membrane by preventing its premature polymerization, and by directing it to the export apparatus. The sequence is that of Flagellar protein FliT from Yersinia pseudotuberculosis serotype IB (strain PB1/+).